Reading from the N-terminus, the 503-residue chain is MTAVADAPQADIEGVASPQAVVVGVMAGEGVQIGVLLDANAPVSVMTDPLLKVVNSRLRELGEAPLEATGRGRWALCLVDGAPLRATQSLTEQDVYDGDRLWIRFIADTERRSQVIEHISTAVASDLSKRFARIDPIVAVQVGASMVATGVVLATGVLGWWRWHHNTWLTTIYTAVIGVLVLAVAMLLLMRAKTDADRRVADIMLMSAIMPVTVAAAAAPPGPVGSPQAVLGFGVLTVAAALALRFTGRRLGIYTTIVIIGALTMLAALARMVAATSAVTLLSSLLLICVVAYHAAPALSRRLAGIRLPVFPSATSRWVFEARPDLPTTVVVSGGSAPVLEGPSSVRDVLLQAERARSFLSGLLTGLGVMVVVCMTSLCDPHTGQRWLPLILAGFTSGFLLLRGRSYVDRWQSITLAGTAVIIAAAVCVRYALELSSPLAVSIVAAILVLLPAAGMAAAAHVPHTIYSPLFRKFVEWIEYLCLMPIFPLALWLMNVYAAIRYR.

11 helical membrane-spanning segments follow: residues 137–157 (IVAV…ATGV), 169–189 (LTTI…MLLL), 200–220 (VADI…AAAP), 224–244 (VGSP…ALAL), 250–270 (RLGI…AALA), 272–292 (MVAA…CVVA), 359–379 (FLSG…TSLC), 382–402 (HTGQ…FLLL), 413–433 (SITL…RYAL), 439–459 (LAVS…MAAA), and 480–500 (YLCL…YAAI).

It belongs to the EccD/Snm4 family. Part of the ESX-5 / type VII secretion system (T7SS), which is composed of cytosolic and membrane components. The ESX-5 membrane complex is composed of EccB5, EccC5, EccD5 and EccE5.

The protein resides in the cell inner membrane. Functionally, part of the ESX-5 specialized secretion system, which is responsible for the secretion of EsxN and a number of PE_PGRS and PPE proteins, including PPE41. In Mycobacterium tuberculosis (strain CDC 1551 / Oshkosh), this protein is ESX-5 secretion system protein EccD5.